A 571-amino-acid polypeptide reads, in one-letter code: PR domain zinc finger protein 14 (571 aa).

A Phosphoserine modification is found at Ser79. Residues 129–191 (LGHQIIGGDN…PKPSNQEGKS (63 aa)) are disordered. A compositionally biased stretch (polar residues) spans 165–176 (RTSQLLPCSPSK). The interval 194–384 (RFQFTEEDLH…DIPVSLQVTE (191 aa)) is interaction with CBFA2T2. Residues 251-367 (EGLCLMQTVF…QNQELLVWYG (117 aa)) enclose the SET domain. Residues 400–424 (YRCERCGKVFTYKYYRDKHLKYTPC) form a C2H2-type 1; atypical zinc finger. 5 C2H2-type zinc fingers span residues 432–455 (FPCSLCKRSFEKRDRLRIHILHVH), 461–483 (HKCSTCGKCFSQSSSLNKHMRVH), 489–511 (YQCVYCTKRFTASSILRTHIRQH), 517–540 (FKCKYCGKSFASHAAHDSHVRRSH), and 546–568 (CSCSICGKIFSDQETFYSHMKFH).

It belongs to the class V-like SAM-binding methyltransferase superfamily. In terms of assembly, interacts with CBFA2T2. As to expression, expressed in embryonic stem cells. Tends to be overexpressed in breast cancer (at protein level).

The protein localises to the nucleus. In terms of biological role, transcription factor that has both positive and negative roles on transcription. Required for the maintenance of embryonic stem cell identity and the reacquisition of pluripotency in somatic cells. May play an essential role in germ cell development at 2 levels: the reacquisition of potential pluripotency, including SOX2 up-regulation, and successful epigenetic reprogramming, characterized by EHMT1 repression. Its association with CBFA2T2 is required for the functions in pluripotency and germ cell formation. Directly up-regulates the expression of pluripotency gene POU5F1 through its proximal enhancer. Binds to the DNA consensus sequence 5'-GGTC[TC]CTAA-3'. The polypeptide is PR domain zinc finger protein 14 (PRDM14) (Homo sapiens (Human)).